The chain runs to 185 residues: Ribosome-recycling factor (185 aa).

It belongs to the RRF family.

It localises to the cytoplasm. In terms of biological role, responsible for the release of ribosomes from messenger RNA at the termination of protein biosynthesis. May increase the efficiency of translation by recycling ribosomes from one round of translation to another. This chain is Ribosome-recycling factor, found in Bacillus mycoides (strain KBAB4) (Bacillus weihenstephanensis).